A 710-amino-acid chain; its full sequence is MADMRRRNGSGGSSNHERNEQILFPKPETLDFDLPCDTSFPQQIGDNAASSSGSNVKSLLIEMGFCPTLVQKAIDENGQDDFELLLEILTKSTETEPPGPSFHGLMEPKPEPDIEYETDRIRIALLTMKFPENLVDFALDRLGKDTPIDEMVDFIVAAQLAEKYAEESEDSLDGAEINEEDEDVTPVTARGPEVPNEQLFETMDKTLRLLEMGFSNDEISMAIEKIGTKGQISVLAESIVTGEFPAECHDDLEDIEKKVSAAAPAVNRTCLSKSWRFVGVGAQKEDGGGGSSSGTANIKPDPGIESFPFPATDNVGETSRGKRPKDEDENAYPEEYTGYDDRGKRLRPEDMGDSSSFMETPWMQDEWKDNTYEFPSVMQPRLSQSLGPKVARRPYFFYGQLGELSPSWWSKISGFLFGIHPEHVDTRLCSALRRTEGYLHNLPTVNRFNTLPNPRLTIQDAMPHMRSWWPQWDIRKHFNSGTCSNMKDATLLCERIGRRIAECKGKPTQQDQTLILRHCHTSNLIWIAPNILSPLEPEHLECIMGYPMNHTNIGGGRLAERLKLFDYCFQTDTLGYHLSVLKSMFPQGLTVLSLFSGIGGAEIALDRLGIHLKGVVSVESCGLSRNILKRWWQTSGQTGELVQIEEIKSLTAKRLETLMQRFGGFDFVICQNPSTPLDLSKEISNSEACEFDYTLFNEFARVTKRVRDMM.

The segment at 1 to 21 is disordered; sequence MADMRRRNGSGGSSNHERNEQ. One can recognise a UBA 1 domain in the interval 52 to 92; sequence SGSNVKSLLIEMGFCPTLVQKAIDENGQDDFELLLEILTKS. The segment covering 167–184 has biased composition (acidic residues); it reads ESEDSLDGAEINEEDEDV. The disordered stretch occupies residues 167 to 192; sequence ESEDSLDGAEINEEDEDVTPVTARGP. The 45-residue stretch at 198-242 folds into the UBA 2 domain; the sequence is QLFETMDKTLRLLEMGFSNDEISMAIEKIGTKGQISVLAESIVTG. The interval 282–360 is disordered; sequence AQKEDGGGGS…MGDSSSFMET (79 aa). Residues 339–350 are compositionally biased toward basic and acidic residues; the sequence is YDDRGKRLRPED. Residues 379–710 enclose the SAM-dependent MTase DRM-type domain; it reads QPRLSQSLGP…RVTKRVRDMM (332 aa).

The protein belongs to the class I-like SAM-binding methyltransferase superfamily. DRM-methyltransferase family. As to quaternary structure, interacts with Pol V.

The protein resides in the nucleus. Functionally, catalytically inactive DNA methyltransferase that acts as regulatory factor for DRM2-mediated DNA methylation. Required for maintenance of non-CpG DNA methylation. Required for normal establishment and maintenance of RNA-directed DNA methylation (RdDM) and accumulation of specific repeat-associated small interfering RNAs (siRNAs). Required for nucleolus organizer region (NOR) nuclear organization during interphase. Acts downstream of the production of siRNAs. May promote RNA polymerase V (Pol V) transcriptional elongation or assist in the stabilization of Pol V transcripts. The sequence is that of Probable inactive DNA (cytosine-5)-methyltransferase DRM3 from Arabidopsis thaliana (Mouse-ear cress).